Reading from the N-terminus, the 659-residue chain is UvrABC system protein B (659 aa).

In terms of domain architecture, Helicase ATP-binding spans 25 to 182 (QSIENGNRGQ…KKLIEIQYER (158 aa)). Position 38–45 (38–45 (GVTGSGKT)) interacts with ATP. The Beta-hairpin signature appears at 91-114 (YYDYYQPEAYVPQTDTFIEKDASI). Positions 429–582 (QIDDLYGEIQ…QMEYNEEHNI (154 aa)) constitute a Helicase C-terminal domain. The region spanning 622-657 (EKLIEQYEEEMKEAAKNLQFERAAELRDIIKDLKEN) is the UVR domain.

The protein belongs to the UvrB family. As to quaternary structure, forms a heterotetramer with UvrA during the search for lesions. Interacts with UvrC in an incision complex.

Its subcellular location is the cytoplasm. Functionally, the UvrABC repair system catalyzes the recognition and processing of DNA lesions. A damage recognition complex composed of 2 UvrA and 2 UvrB subunits scans DNA for abnormalities. Upon binding of the UvrA(2)B(2) complex to a putative damaged site, the DNA wraps around one UvrB monomer. DNA wrap is dependent on ATP binding by UvrB and probably causes local melting of the DNA helix, facilitating insertion of UvrB beta-hairpin between the DNA strands. Then UvrB probes one DNA strand for the presence of a lesion. If a lesion is found the UvrA subunits dissociate and the UvrB-DNA preincision complex is formed. This complex is subsequently bound by UvrC and the second UvrB is released. If no lesion is found, the DNA wraps around the other UvrB subunit that will check the other stand for damage. In Clostridium perfringens (strain ATCC 13124 / DSM 756 / JCM 1290 / NCIMB 6125 / NCTC 8237 / Type A), this protein is UvrABC system protein B.